Here is a 224-residue protein sequence, read N- to C-terminus: Heme response regulator HssR (224 aa).

One can recognise a Response regulatory domain in the interval 3–116; it reads TCLIVDDDPK…ELMFRIKAVL (114 aa). Aspartate 52 bears the 4-aspartylphosphate mark. The ompR/PhoB-type DNA-binding region spans 124 to 222; that stretch reads NNEVSIGNLT…VRGLGYKVDD (99 aa).

In terms of processing, phosphorylated by HssS.

The protein resides in the cytoplasm. Member of the two-component regulatory system HssS/HssR involved in intracellular heme homeostasis and tempering of staphylococcal virulence. Phosphorylated HssR binds to a direct repeat sequence within hrtAB promoter and activates the expression of hrtAB, an efflux pump, in response to extracellular heme, hemin, hemoglobin or blood. This is Heme response regulator HssR (hssR) from Staphylococcus saprophyticus subsp. saprophyticus (strain ATCC 15305 / DSM 20229 / NCIMB 8711 / NCTC 7292 / S-41).